Reading from the N-terminus, the 323-residue chain is Calcium homeostasis modulator protein 2 (323 aa).

Over 1–21 (MAALIAENFRFLSLFFKSKDV) the chain is Cytoplasmic. A central pore region spans residues 14–39 (LFFKSKDVMIFNGLVALGTVGSQELF). Residues 22–43 (MIFNGLVALGTVGSQELFSVVA) traverse the membrane as a helical segment. Residues 44–52 (FHCPCSPAR) lie on the Extracellular side of the membrane. Intrachain disulfides connect Cys-46/Cys-130 and Cys-48/Cys-162. Residues 53 to 76 (NYLYGLAAIGVPALVLFIIGIILN) traverse the membrane as a helical segment. At 77 to 101 (NHTWNLVAECQHRRTKNCSAAPTFL) the chain is on the cytoplasmic side. Residues 102–132 (LLSSILGRAAVAPVTWSVISLLRGEAYVCAL) form a helical membrane-spanning segment. The Extracellular segment spans residues 133–179 (SEFVDPSSLTAREEHFPSAHATEILARFPCKENPDNLSDFREEVSRR). The tract at residues 145–152 (EEHFPSAH) is hemichannel docking. The chain crosses the membrane as a helical span at residues 180–206 (LRYESQLFGWLLIGVVAILVFLTKCLK). The Cytoplasmic segment spans residues 207–323 (HYCSPLSYRQ…DNVEMALLPS (117 aa)). The segment at 214–251 (YRQEAYWAQYRANEDQLFQRTAEVHSRVLAANNVRRFF) is intersubunit interaction.

It belongs to the CALHM family. Homo-undecamer. Two undecameric hemichannels can assemble in a head-to-head manner to form a gap junction. As to expression, placenta.

It is found in the cell membrane. It carries out the reaction ATP(in) = ATP(out). With respect to regulation, inhibited by Ca(2+) and ruthenium red in a voltage-dependent way. Its function is as follows. Pore-forming subunit of Ca(2+) homeostasis modulator channels. Mediates ATP release from astrocytes and ATP-induced Ca(2+) influx in microglia thus regulating neuronal ATP and Ca(2+) homeostasis, synaptic transmission and neuroinflammatory response. May form intercellular gap junctions. The gating mechanism remains unknown. This chain is Calcium homeostasis modulator protein 2, found in Homo sapiens (Human).